Consider the following 993-residue polypeptide: ATP-dependent DNA helicase MPH1 (993 aa).

In terms of domain architecture, Helicase ATP-binding spans I94–K261. Residue I107–T114 coordinates ATP. The DEAH box signature appears at D209–H212. The Helicase C-terminal domain occupies K507–I655. The interval N530–M551 is disordered. The segment covering R539–M551 has biased composition (polar residues). Residues L751–E810 form an FKH1-binding region region. T776 and T785 each carry phosphothreonine.

The protein belongs to the DEAD box helicase family. DEAH subfamily. FANCM sub-subfamily. As to quaternary structure, interacts with the MHF histone-fold complex composed of MHF1 and MHF2 to form the FANCM-MHF complex. Interacts with FHK1. Post-translationally, phosphorylation at both Thr-776 and Thr-785 is required for the interaction with FKH1.

The protein localises to the nucleus. The catalysed reaction is ATP + H2O = ADP + phosphate + H(+). Functionally, ATP-dependent DNA helicase involved in DNA damage repair by homologous recombination and in genome maintenance. Capable of unwinding D-loops. Plays a role in limiting crossover recombinants during mitotic DNA double-strand break (DSB) repair. Prevents crossovers between ectopic sequences by removing substrates for MUS81-MMS4 or RAD1-RAD10 cleavage. Component of a FANCM-MHF complex which promotes gene conversion at blocked replication forks, probably by reversal of the stalled fork. Binds to flap-structured DNA but not to non-flap nicked DNA, and participates in Okazaki fragment processing by stimulating the endonuclease activities of FEN1 and DNA2. Involved in recombination donor preference during mating-type switching via interaction with FKH1. This chain is ATP-dependent DNA helicase MPH1, found in Saccharomyces cerevisiae (strain ATCC 204508 / S288c) (Baker's yeast).